We begin with the raw amino-acid sequence, 393 residues long: Formate-dependent phosphoribosylglycinamide formyltransferase (393 aa).

Residues 22–23 and glutamate 82 contribute to the N(1)-(5-phospho-beta-D-ribosyl)glycinamide site; that span reads EL. Residues arginine 114, lysine 155, 160-165, 195-198, and glutamate 203 contribute to the ATP site; these read SSGKGQ and ESFV. An ATP-grasp domain is found at 119 to 308; the sequence is RLAAEEVGLK…EFALHVRAIL (190 aa). Mg(2+) is bound by residues glutamate 267 and glutamate 279. Residues aspartate 286, lysine 356, and 363 to 364 each bind N(1)-(5-phospho-beta-D-ribosyl)glycinamide; that span reads RR.

This sequence belongs to the PurK/PurT family. Homodimer.

The catalysed reaction is N(1)-(5-phospho-beta-D-ribosyl)glycinamide + formate + ATP = N(2)-formyl-N(1)-(5-phospho-beta-D-ribosyl)glycinamide + ADP + phosphate + H(+). It functions in the pathway purine metabolism; IMP biosynthesis via de novo pathway; N(2)-formyl-N(1)-(5-phospho-D-ribosyl)glycinamide from N(1)-(5-phospho-D-ribosyl)glycinamide (formate route): step 1/1. In terms of biological role, involved in the de novo purine biosynthesis. Catalyzes the transfer of formate to 5-phospho-ribosyl-glycinamide (GAR), producing 5-phospho-ribosyl-N-formylglycinamide (FGAR). Formate is provided by PurU via hydrolysis of 10-formyl-tetrahydrofolate. The chain is Formate-dependent phosphoribosylglycinamide formyltransferase from Maridesulfovibrio salexigens (strain ATCC 14822 / DSM 2638 / NCIMB 8403 / VKM B-1763) (Desulfovibrio salexigens).